Consider the following 748-residue polypeptide: Probable transcriptional regulator SLK1 (748 aa).

2 disordered regions span residues 67 to 93 (QHLPQQQQQQLLQQQTGQGSVPMRENN) and 138 to 163 (QQRLRQHQQMLQSMSPSQRLQLQQQQ). Over residues 71 to 81 (QQQQQQLLQQQ) the composition is skewed to low complexity. The dimerization stretch occupies residues 204–451 (PAENCITYWR…EQKIGPIEGL (248 aa)). A Nuclear localization signal motif is present at residues 213-227 (RKFVAEYFSPRAKQR). Over residues 572–587 (NAMNNPNSNTGKQEGF) the composition is skewed to polar residues. 2 disordered regions span residues 572-653 (NAMN…GNTP) and 667-712 (ENGG…NNSF). Residues 588–606 (SSQNPTPNSNQSPSSSSQQ) are compositionally biased toward low complexity. The segment covering 615 to 653 (FPNSPQMQQQQRTMNGPTNILPQNHPHQLQSPHSHGNTP) has biased composition (polar residues). Residues 667–686 (ENGGSVQQQQAFSGQSGSNS) show a composition bias toward low complexity. Residues 687-699 (NAERNTTASTSNI) are compositionally biased toward polar residues.

The protein belongs to the adn1/SEU family. Forms corepressor complexes with LUH; LUH is the transcription repressor subunit and SLK1 the specific DNA-binding adapters. In terms of tissue distribution, expressed in young flower meristems, ovules and the carpel margin meristem.

It is found in the nucleus. In terms of biological role, probable transcription regulator that functions in the development of the carpel margin meristem similarly to SEUSS (SEU). In association with SEU, supports organ development from meristematic regions by facilitating auxin response and thus organ initiation, and by sustaining meristematic potential through the maintenance of PHABULOSA expression. DNA-binding adapter subunit of the SEU-SLK1 transcriptional corepressor of abiotic stress (e.g. salt and osmotic stress) response genes. This is Probable transcriptional regulator SLK1 (SLK1) from Arabidopsis thaliana (Mouse-ear cress).